The following is a 542-amino-acid chain: Protein MPA43 (542 aa).

The chain is Protein MPA43 (MPA43) from Saccharomyces cerevisiae (strain ATCC 204508 / S288c) (Baker's yeast).